Reading from the N-terminus, the 409-residue chain is Outer membrane protein assembly factor BamB (409 aa).

An N-terminal signal peptide occupies residues 1-34 (MAGNILLLILDYVFHAGSRTLRVCILSLLILLSG). Residue Cys-35 is the site of N-palmitoyl cysteine attachment. Cys-35 carries S-diacylglycerol cysteine lipidation.

Belongs to the BamB family. As to quaternary structure, part of the Bam complex.

It localises to the cell outer membrane. In terms of biological role, part of the outer membrane protein assembly complex, which is involved in assembly and insertion of beta-barrel proteins into the outer membrane. In Nitrosomonas eutropha (strain DSM 101675 / C91 / Nm57), this protein is Outer membrane protein assembly factor BamB.